A 479-amino-acid polypeptide reads, in one-letter code: Glutamate--tRNA ligase 2 (479 aa).

Positions Pro10 to Gly20 match the 'HIGH' region motif. Positions Lys243–Arg247 match the 'KMSKS' region motif. Lys246 is an ATP binding site.

Belongs to the class-I aminoacyl-tRNA synthetase family. Glutamate--tRNA ligase type 1 subfamily. Monomer.

The protein resides in the cytoplasm. The catalysed reaction is tRNA(Glu) + L-glutamate + ATP = L-glutamyl-tRNA(Glu) + AMP + diphosphate. Its function is as follows. Catalyzes the attachment of glutamate to tRNA(Glu) in a two-step reaction: glutamate is first activated by ATP to form Glu-AMP and then transferred to the acceptor end of tRNA(Glu). The sequence is that of Glutamate--tRNA ligase 2 from Thermoanaerobacter pseudethanolicus (strain ATCC 33223 / 39E) (Clostridium thermohydrosulfuricum).